The chain runs to 312 residues: Malate dehydrogenase (312 aa).

NAD(+) contacts are provided by residues 7 to 13 (GAAGGIG) and Asp34. Residues Arg81 and Arg87 each contribute to the substrate site. NAD(+)-binding positions include Asn94 and 117-119 (ITN). Positions 119 and 153 each coordinate substrate. His177 acts as the Proton acceptor in catalysis. Met227 lines the NAD(+) pocket.

This sequence belongs to the LDH/MDH superfamily. MDH type 1 family. Homodimer.

It catalyses the reaction (S)-malate + NAD(+) = oxaloacetate + NADH + H(+). Functionally, catalyzes the reversible oxidation of malate to oxaloacetate. The sequence is that of Malate dehydrogenase from Pectobacterium carotovorum subsp. carotovorum (strain PC1).